Reading from the N-terminus, the 1480-residue chain is DNA polymerase zeta catalytic subunit (1480 aa).

The interval 403-488 is disordered; sequence DRSKFPKSPL…GDTRKAGKRL (86 aa). Over residues 411 to 427 the composition is skewed to polar residues; that stretch reads PLNSSQEVTIHSSQDRQ. Residues 457–468 show a composition bias toward basic and acidic residues; the sequence is TKREIEFCRDLP. Residues 470 to 479 are compositionally biased toward polar residues; the sequence is RPTSSEPNQG. Residues Cys-1381, Cys-1384, Cys-1400, and Cys-1403 each contribute to the Zn(2+) site. A CysA-type zinc finger spans residues 1381–1403; the sequence is CSSCLKNNIEIIPDKINSLCSDC. Residues Cys-1432, Cys-1435, Cys-1446, and Cys-1451 each contribute to the [4Fe-4S] cluster site. The CysB motif signature appears at 1432–1451; sequence CRGCSKLSSSDPVLCKSNSC.

This sequence belongs to the DNA polymerase type-B family. As to quaternary structure, forms DNA polymerase zeta with rev7. The cofactor is [4Fe-4S] cluster.

It localises to the mitochondrion. The protein localises to the nucleus. It catalyses the reaction DNA(n) + a 2'-deoxyribonucleoside 5'-triphosphate = DNA(n+1) + diphosphate. In terms of biological role, nonessential DNA polymerase. Required for DNA damage induced mutagenesis. Involved in DNA repair, mitochondrial DNA repair and translesion synthesis. Has a role in the bypass of abasic (AP) sites. This Schizosaccharomyces pombe (strain 972 / ATCC 24843) (Fission yeast) protein is DNA polymerase zeta catalytic subunit (rev3).